The following is a 751-amino-acid chain: MLRVLFLLCGLSGLRTKENSERLHVQVTVPEKMRSVTSEGFETEVVYNIVIEGKTYTLNLMQKLFLPRDFRVYGYDSTGIMKDLEQQFQNFCYYQGFVEGYPNSMVIVSTCTGLRGLLQFENVTYGIEPLESSIGFEHVIYQVKNKNESISLYAEKEVEFRDLPYKVQSVQPREFSQYIEMHVVVEKNLYKHMGSDTAVVSQKIFQLIGLTNAVFTSFNITIILSSLELWIDENKISTTGDANELLYRFLKWKKSYLVLRPHDVAFLLVYREIAKYVGATFQGKMCDINYSGGVALHPKTISLESLAIILAQLLSLSMGIAYDDINKCKCPGSVCIMNPEAIHSSGVKIFSNCSIEDFSRFISKQKSQCLQNLPRLEPFYKQDAVCGNSIVEAGEMCDCGTAEECGRAVPICCNSATCRLEVGSQCAEGECCENCTFKERGQSCRPPVGECDLFEYCNGTSALCPDDIVIQNGHPCGENQWICVDGSCISPPEQCKSIFGEEVEGGTPECYEELNAMADIILGICGITHDGYKKCESGNRKCGKLMCKHTTENIIDIKNATIIYANVSGSICLSLEYKPDHLDAAKMWVPNGAVCGSNKICRDKACVETTYVNLGCTLQNCNNQGICNSLQHCHCNPTFLPPNCSAVDERWAGGSVDSGNFQGGGVPGIGGLTSVGTPPFIPGVPGVRRYMEDVYQTAKPTRWPFFLLIPFFIILGALIAILVKVQFQRKKWKTEDYTSDEQFESDSELKE.

Residues 1–16 (MLRVLFLLCGLSGLRT) form the signal peptide. Residues 17 to 173 (KENSERLHVQ…PYKVQSVQPR (157 aa)) constitute a propeptide that is removed on maturation. The Extracellular portion of the chain corresponds to 17 to 702 (KENSERLHVQ…DVYQTAKPTR (686 aa)). Asparagine 122, asparagine 147, asparagine 219, and asparagine 289 each carry an N-linked (GlcNAc...) asparagine glycan. The Peptidase M12B domain occupies 177–374 (QYIEMHVVVE…QKSQCLQNLP (198 aa)). Disulfide bonds link cysteine 286-cysteine 369, cysteine 328-cysteine 353, and cysteine 330-cysteine 335. N-linked (GlcNAc...) asparagine glycosylation is found at asparagine 352, asparagine 434, asparagine 458, asparagine 559, and asparagine 566. The Disintegrin domain maps to 383-472 (DAVCGNSIVE…LCPDDIVIQN (90 aa)). Cysteine 444 and cysteine 464 are joined by a disulfide. One can recognise an EGF-like domain in the interval 612–645 (VNLGCTLQNCNNQGICNSLQHCHCNPTFLPPNCS). Intrachain disulfides connect cysteine 616–cysteine 627, cysteine 621–cysteine 633, and cysteine 635–cysteine 644. Asparagine 643 carries N-linked (GlcNAc...) asparagine glycosylation. A helical membrane pass occupies residues 703–723 (WPFFLLIPFFIILGALIAILV). At 724–751 (KVQFQRKKWKTEDYTSDEQFESDSELKE) the chain is on the cytoplasmic side. At serine 745 the chain carries Phosphoserine.

Heterodimer with ADAM1/fertilin subunit alpha. The signal and the metalloprotease domain are cleaved during the epididymal maturation of the spermatozoa. Expressed specifically in testis.

It is found in the membrane. Functionally, sperm surface membrane protein that may be involved in sperm-egg plasma membrane adhesion and fusion during fertilization. Could have a direct role in sperm-zona binding or migration of sperm from the uterus into the oviduct. Interactions with egg membrane could be mediated via binding between its disintegrin-like domain to one or more integrins receptors on the egg. This is a non catalytic metalloprotease-like protein. This is Disintegrin and metalloproteinase domain-containing protein 2 (ADAM2) from Oryctolagus cuniculus (Rabbit).